The following is a 397-amino-acid chain: E3 ubiquitin-protein ligase RNF149 (397 aa).

A signal peptide spans 1 to 20 (MLRWLCLYSALCALTHGSSA). The segment covering 39–49 (TNSSVTGSTES) has biased composition (polar residues). Positions 39-60 (TNSSVTGSTESGRYGDSSPKES) are disordered. N-linked (GlcNAc...) asparagine glycosylation is found at asparagine 40 and asparagine 140. The PA domain maps to 83–170 (YIVPGTSAAA…PKGMEIMEPL (88 aa)). Residues 196–216 (VVFVAIAFITMMIISLAWLIF) traverse the membrane as a helical segment. Asparagine 231 carries an N-linked (GlcNAc...) asparagine glycan. The RING-type; atypical zinc-finger motif lies at 264–305 (CAVCIENYKTKDLVRILPCKHIFHRLCIDPWLIEHRTCPMCK). The tract at residues 341–397 (SITQEESRSEGNNLPSSSTGSSLQQSNSVKDDAGETTALLDDPGNDNAAATHTQDSH) is disordered. Residues 351–368 (GNNLPSSSTGSSLQQSNS) show a composition bias toward low complexity. Over residues 388-397 (AAATHTQDSH) the composition is skewed to polar residues.

Its subcellular location is the membrane. The enzyme catalyses S-ubiquitinyl-[E2 ubiquitin-conjugating enzyme]-L-cysteine + [acceptor protein]-L-lysine = [E2 ubiquitin-conjugating enzyme]-L-cysteine + N(6)-ubiquitinyl-[acceptor protein]-L-lysine.. Its pathway is protein modification; protein ubiquitination. E3 ubiquitin-protein ligase. Ubiquitinates BRAF, inducing its proteasomal degradation. The polypeptide is E3 ubiquitin-protein ligase RNF149 (rnf149) (Xenopus laevis (African clawed frog)).